We begin with the raw amino-acid sequence, 65 residues long: Lantibiotic lacticin 3147 A2 (65 aa).

A propeptide spanning residues 1–36 (MKEKNMKKNDTIELQLGKYLEDDMIELAEGDESHGG) is cleaved from the precursor. A 2-oxobutanoic acid modification is found at Thr37. A 2,3-didehydrobutyrine mark is found at Thr38 and Thr41. 2 positions are modified to 2,3-didehydroalanine (Ser): Ser45 and Ser48. The segment at residues 52–56 (STNTC) is a cross-link (lanthionine (Ser-Cys)). 2 cross-links (beta-methyllanthionine (Thr-Cys)) span residues 58-61 (TTKC) and 62-65 (TRAC).

Maturation of lantibiotics involves the enzymatic conversion of Thr, and Ser into dehydrated AA and the formation of thioether bonds with cysteine. This is followed by membrane translocation and cleavage of the modified precursor. In terms of processing, it is not established whether the 2,3-didehydrobutyrines are the E- or Z-isomers. In the NMR model they were assumed to be the Z-isomer.

The protein localises to the secreted. Its function is as follows. Lanthionine-containing peptide antibiotic (lantibiotic) active on Gram-positive bacteria. The bactericidal activity of lantibiotics is based on depolarization of energized bacterial cytoplasmic membranes, initiated by the formation of aqueous transmembrane pores. When present individually lacticin 3147 A2 exhibits weak activity towards L.lactis strain AM2 and L.lactis strain HP, and no activity towards L.lactis strain IFPL359, but when combined with lacticin 3147 A1 it displays strong activity towards all three strains. The chain is Lantibiotic lacticin 3147 A2 from Lactococcus lactis subsp. lactis (Streptococcus lactis).